The sequence spans 285 residues: Glutamate racemase (285 aa).

Residues 28–29 (DS) and 60–61 (YG) contribute to the substrate site. Cysteine 92 (proton donor/acceptor) is an active-site residue. Position 93 to 94 (93 to 94 (NT)) interacts with substrate. Cysteine 204 acts as the Proton donor/acceptor in catalysis. 205–206 (TH) contacts substrate.

Belongs to the aspartate/glutamate racemases family.

The enzyme catalyses L-glutamate = D-glutamate. It participates in cell wall biogenesis; peptidoglycan biosynthesis. Provides the (R)-glutamate required for cell wall biosynthesis. The protein is Glutamate racemase of Escherichia coli O7:K1 (strain IAI39 / ExPEC).